The primary structure comprises 198 residues: Segregation and condensation protein B (198 aa).

Residues 168-198 (KLADPATDEPDQNEMDLFFDRFNQSKEQEEE) are disordered.

It belongs to the ScpB family. As to quaternary structure, homodimer. Homodimerization may be required to stabilize the binding of ScpA to the Smc head domains. Component of a cohesin-like complex composed of ScpA, ScpB and the Smc homodimer, in which ScpA and ScpB bind to the head domain of Smc. The presence of the three proteins is required for the association of the complex with DNA.

It is found in the cytoplasm. In terms of biological role, participates in chromosomal partition during cell division. May act via the formation of a condensin-like complex containing Smc and ScpA that pull DNA away from mid-cell into both cell halves. The polypeptide is Segregation and condensation protein B (Listeria monocytogenes serovar 1/2a (strain ATCC BAA-679 / EGD-e)).